Consider the following 143-residue polypeptide: Large ribosomal subunit protein uL11 (143 aa).

The protein belongs to the universal ribosomal protein uL11 family. Part of the ribosomal stalk of the 50S ribosomal subunit. Interacts with L10 and the large rRNA to form the base of the stalk. L10 forms an elongated spine to which L12 dimers bind in a sequential fashion forming a multimeric L10(L12)X complex. In terms of processing, one or more lysine residues are methylated.

Forms part of the ribosomal stalk which helps the ribosome interact with GTP-bound translation factors. This chain is Large ribosomal subunit protein uL11, found in Delftia acidovorans (strain DSM 14801 / SPH-1).